The primary structure comprises 230 residues: Dephospho-CoA kinase (230 aa).

One can recognise a DPCK domain in the interval 3–206; the sequence is LVGLTGGIAS…EPLTWKERLR (204 aa). 8-15 serves as a coordination point for ATP; sequence GGIASGKS.

The protein belongs to the CoaE family.

The enzyme catalyses 3'-dephospho-CoA + ATP = ADP + CoA + H(+). The protein operates within cofactor biosynthesis; coenzyme A biosynthesis; CoA from (R)-pantothenate: step 5/5. In terms of biological role, catalyzes the phosphorylation of the 3'-hydroxyl group of dephosphocoenzyme A to form coenzyme A. This chain is Dephospho-CoA kinase, found in Oryza sativa subsp. japonica (Rice).